A 406-amino-acid polypeptide reads, in one-letter code: GTPase Obg (406 aa).

An Obg domain is found at 1–159; that stretch reads MKFVDEVSIF…RDLKLELKVL (159 aa). The interval 126-149 is disordered; sequence GNTRFKSSTNRAPRQTTPGKPGES. Polar residues predominate over residues 129 to 143; sequence RFKSSTNRAPRQTTP. The 174-residue stretch at 160–333 folds into the OBG-type G domain; that stretch reads ADVGLLGLPN…ICRDIMHYLE (174 aa). GTP is bound by residues 166 to 173, 191 to 195, 213 to 216, 283 to 286, and 314 to 316; these read GLPNAGKS, FTTLV, DIPG, NKMD, and SAI. Positions 173 and 193 each coordinate Mg(2+). Residues 376-406 form a disordered region; it reads SGVRSVDDIDEDDDFFDDEDDDGPEIIYVRD. Positions 383–399 are enriched in acidic residues; it reads DIDEDDDFFDDEDDDGP.

This sequence belongs to the TRAFAC class OBG-HflX-like GTPase superfamily. OBG GTPase family. In terms of assembly, monomer. Mg(2+) is required as a cofactor.

The protein localises to the cytoplasm. In terms of biological role, an essential GTPase which binds GTP, GDP and possibly (p)ppGpp with moderate affinity, with high nucleotide exchange rates and a fairly low GTP hydrolysis rate. Plays a role in control of the cell cycle, stress response, ribosome biogenesis and in those bacteria that undergo differentiation, in morphogenesis control. This Ectopseudomonas mendocina (strain ymp) (Pseudomonas mendocina) protein is GTPase Obg.